Consider the following 529-residue polypeptide: Bifunctional purine biosynthesis protein PurH (529 aa).

In terms of domain architecture, MGS-like spans 1–148 (MQQRRSVRRA…KNHKDVAIVV (148 aa)).

This sequence belongs to the PurH family.

It carries out the reaction (6R)-10-formyltetrahydrofolate + 5-amino-1-(5-phospho-beta-D-ribosyl)imidazole-4-carboxamide = 5-formamido-1-(5-phospho-D-ribosyl)imidazole-4-carboxamide + (6S)-5,6,7,8-tetrahydrofolate. The catalysed reaction is IMP + H2O = 5-formamido-1-(5-phospho-D-ribosyl)imidazole-4-carboxamide. It functions in the pathway purine metabolism; IMP biosynthesis via de novo pathway; 5-formamido-1-(5-phospho-D-ribosyl)imidazole-4-carboxamide from 5-amino-1-(5-phospho-D-ribosyl)imidazole-4-carboxamide (10-formyl THF route): step 1/1. The protein operates within purine metabolism; IMP biosynthesis via de novo pathway; IMP from 5-formamido-1-(5-phospho-D-ribosyl)imidazole-4-carboxamide: step 1/1. This Salmonella arizonae (strain ATCC BAA-731 / CDC346-86 / RSK2980) protein is Bifunctional purine biosynthesis protein PurH.